Reading from the N-terminus, the 266-residue chain is Hydroxyethylthiazole kinase (266 aa).

Residue Met43 coordinates substrate. The ATP site is built by Arg119 and Thr166. Gly193 provides a ligand contact to substrate.

It belongs to the Thz kinase family. Mg(2+) serves as cofactor.

The catalysed reaction is 5-(2-hydroxyethyl)-4-methylthiazole + ATP = 4-methyl-5-(2-phosphooxyethyl)-thiazole + ADP + H(+). It participates in cofactor biosynthesis; thiamine diphosphate biosynthesis; 4-methyl-5-(2-phosphoethyl)-thiazole from 5-(2-hydroxyethyl)-4-methylthiazole: step 1/1. Catalyzes the phosphorylation of the hydroxyl group of 4-methyl-5-beta-hydroxyethylthiazole (THZ). The polypeptide is Hydroxyethylthiazole kinase (Methanococcus maripaludis (strain C7 / ATCC BAA-1331)).